The following is a 382-amino-acid chain: Heme A synthase (382 aa).

A run of 8 helical transmembrane segments spans residues 25–45 (GAVRAWLYLLAVLVVAMVAVG), 112–132 (LLGRIVGLVFFLPFAWFWARG), 141–161 (GLLGLGLLGGLQGAIGWIMVA), 176–196 (LALHLTTASLILAGLVWLAAG), 211–231 (VVACLLPALVLVQIWLGGLVA), 270–290 (LALVQFNHRLFAYLVVAVAIA), 303–323 (AAAGRAMGVAALATAQMGLGI), and 327–347 (LLHVPLWAGLAHQVFAMAVLI). H277 is a binding site for heme. H338 lines the heme pocket.

This sequence belongs to the COX15/CtaA family. Type 2 subfamily. As to quaternary structure, interacts with CtaB. Requires heme b as cofactor.

The protein localises to the cell membrane. The enzyme catalyses Fe(II)-heme o + 2 A + H2O = Fe(II)-heme a + 2 AH2. It participates in porphyrin-containing compound metabolism; heme A biosynthesis; heme A from heme O: step 1/1. Catalyzes the conversion of heme O to heme A by two successive hydroxylations of the methyl group at C8. The first hydroxylation forms heme I, the second hydroxylation results in an unstable dihydroxymethyl group, which spontaneously dehydrates, resulting in the formyl group of heme A. The protein is Heme A synthase of Methylorubrum extorquens (strain CM4 / NCIMB 13688) (Methylobacterium extorquens).